Here is a 736-residue protein sequence, read N- to C-terminus: Na(+)/H(+) antiporter NhaA (736 aa).

Residues 1–387 (MNHSPQSARP…ICGYLLLRAA (387 aa)) form a na(+)/H(+) antiporter NhaA region. The next 11 membrane-spanning stretches (helical) occupy residues 23-43 (AGGI…NSPF), 58-78 (LSLA…LVGL), 96-116 (MLPG…FAVL), 126-146 (GWAV…SLLG), 155-175 (VFLA…IAIF), 178-198 (AEIS…LFVM), 201-221 (MDVV…FFVF), 265-285 (VAFI…FKGL), 298-318 (ILLG…WLAI), 334-354 (LYGV…IGLL), and 367-387 (IGVL…LRAA). The segment at 388–736 (RPDQSAANPL…EKAIWARYGL (349 aa)) is peptidase S49.

It in the N-terminal section; belongs to the NhaA Na(+)/H(+) (TC 2.A.33) antiporter family. This sequence in the C-terminal section; belongs to the peptidase S49 family.

The protein resides in the cell inner membrane. It carries out the reaction Na(+)(in) + 2 H(+)(out) = Na(+)(out) + 2 H(+)(in). Na(+)/H(+) antiporter that extrudes sodium in exchange for external protons. This Brucella melitensis biotype 1 (strain ATCC 23456 / CCUG 17765 / NCTC 10094 / 16M) protein is Na(+)/H(+) antiporter NhaA.